The following is a 1173-amino-acid chain: Protein GIGANTEA (1173 aa).

Disordered regions lie at residues 150–187 (EQQN…RKPL), 604–641 (SGSK…NVKG), and 840–863 (SRTE…SGRP). 2 stretches are compositionally biased toward polar residues: residues 162–172 (SKATTSGSPTS) and 613–633 (YAST…QTAN). Residues 854 to 863 (RHSDEGSGRP) show a composition bias toward basic and acidic residues.

Belongs to the GIGANTEA family. Interacts with SPY. Interacts with ADO1 (via N-terminus) and ADO2. Interacts with ADO3 (via N-terminus). Interacts (via N-terminus) with CDF1. Interacts (via N-terminus) with TCP4. As to expression, widely expressed with highest levels in inflorescence apices, young flowers and young siliques.

The protein resides in the nucleus. It is found in the cytoplasm. Functionally, involved in regulation of circadian rhythm and photoperiodic flowering. May play a role in maintenance of circadian amplitude and period length. Is involved in phytochrome B signaling. Stabilizes ADO3 and the circadian photoreceptor ADO1/ZTL. Regulates 'CONSTANS' (CO) in the long-day flowering pathway by modulating the ADO3-dependent protein stability of CDF1 and CDF2, but is not essential to activate CO transcription. Regulates, via the microRNA miR172, a CO-independent pathway that promotes photoperiodic flowering by inducing 'FLOWERING LOCUS T'. The protein is Protein GIGANTEA (GI) of Arabidopsis thaliana (Mouse-ear cress).